Reading from the N-terminus, the 136-residue chain is Histone H3 (136 aa).

Residues 1–43 (MARTKQTARKNVGGKAPRKHIGQKSARKTASTTAGMKKPHRYR) form a disordered region. Lysine 10 carries the N6-methylated lysine modification. N6-acetyllysine is present on residues lysine 15 and lysine 24. Basic residues predominate over residues 16–27 (APRKHIGQKSAR). 2 positions are modified to N6-methylated lysine: lysine 28 and lysine 37.

This sequence belongs to the histone H3 family. In terms of assembly, the nucleosome is a histone octamer containing two molecules each of H2A, H2B, H3 and H4 assembled in one H3-H4 heterotetramer and two H2A-H2B heterodimers. The octamer wraps approximately 147 bp of DNA.

The protein localises to the nucleus. It localises to the chromosome. In terms of biological role, core component of nucleosome. Nucleosomes wrap and compact DNA into chromatin, limiting DNA accessibility to the cellular machineries which require DNA as a template. Histones thereby play a central role in transcription regulation, DNA repair, DNA replication and chromosomal stability. DNA accessibility is regulated via a complex set of post-translational modifications of histones, also called histone code, and nucleosome remodeling. The sequence is that of Histone H3 from Euplotes crassus.